We begin with the raw amino-acid sequence, 142 residues long: Large ribosomal subunit protein uL13 (142 aa).

It belongs to the universal ribosomal protein uL13 family. As to quaternary structure, part of the 50S ribosomal subunit.

In terms of biological role, this protein is one of the early assembly proteins of the 50S ribosomal subunit, although it is not seen to bind rRNA by itself. It is important during the early stages of 50S assembly. The sequence is that of Large ribosomal subunit protein uL13 from Shewanella amazonensis (strain ATCC BAA-1098 / SB2B).